The following is a 156-amino-acid chain: Small ribosomal subunit protein uS7 (156 aa).

Belongs to the universal ribosomal protein uS7 family. Part of the 30S ribosomal subunit. Contacts proteins S9 and S11.

Functionally, one of the primary rRNA binding proteins, it binds directly to 16S rRNA where it nucleates assembly of the head domain of the 30S subunit. Is located at the subunit interface close to the decoding center, probably blocks exit of the E-site tRNA. The chain is Small ribosomal subunit protein uS7 from Lactobacillus acidophilus (strain ATCC 700396 / NCK56 / N2 / NCFM).